The following is a 301-amino-acid chain: Glucose-1-phosphate adenylyltransferase large subunit (301 aa).

This sequence belongs to the bacterial/plant glucose-1-phosphate adenylyltransferase family. In terms of assembly, heterotetramer.

The protein resides in the plastid. The protein localises to the chloroplast. It localises to the amyloplast. It carries out the reaction alpha-D-glucose 1-phosphate + ATP + H(+) = ADP-alpha-D-glucose + diphosphate. Its pathway is glycan biosynthesis; starch biosynthesis. With respect to regulation, insensitive to 3'phosphoglycerate and orthophosphate. This protein plays a role in synthesis of starch. It catalyzes the synthesis of the activated glycosyl donor, ADP-glucose from Glc-1-P and ATP. The polypeptide is Glucose-1-phosphate adenylyltransferase large subunit (AGA.1) (Triticum aestivum (Wheat)).